The following is a 441-amino-acid chain: Hydroxycinnamoyl-CoA:5-hydroxyanthranilate N-hydroxycinnamoyltransferase HHT1 (441 aa).

Active-site proton acceptor residues include His-158 and Asp-388.

Belongs to the plant acyltransferase family.

The catalysed reaction is 5-hydroxyanthranilate + (E)-4-coumaroyl-CoA = avenanthramide A + CoA. It carries out the reaction 5-hydroxyanthranilate + (E)-caffeoyl-CoA = avenanthramide C + CoA. Its function is as follows. Involved in the biosynthesis of avenanthramide phytoalexins, which are phenolic alkaloids found mainly in oats. Catalyzes the N-acylation of 5-hydroxyanthranilate with 4-coumaroyl-CoA or caffeoyl-CoA as acyl donors, forming avenanthramide A and avenanthramide C, respectively. Does not accept feruloyl-CoA as a substrate. The polypeptide is Hydroxycinnamoyl-CoA:5-hydroxyanthranilate N-hydroxycinnamoyltransferase HHT1 (Avena sativa (Oat)).